The following is a 211-amino-acid chain: MMSPTPEDDRDLVVVRGRLRMMDNGAEHDRERRSYTAWPHLCCGCTIGIILTMFVIATTLLLASLFAFSYMSLESGTCPKEWIGLGYSCMRVAGNNATELEALDMCAQHNSKLVDFTNAKTLVEAIVPFGSTNASFGNIFRLRDSRSTCILPTIGGPISVDCPRTCSVVCQRPRPLSTAASIIRDARIYLRLERRDYYEVYSSILSNAIMK.

The Intravirion segment spans residues 1–46 (MMSPTPEDDRDLVVVRGRLRMMDNGAEHDRERRSYTAWPHLCCGCT). Residues 47 to 67 (IGIILTMFVIATTLLLASLFA) form a helical; Signal-anchor for type II membrane protein membrane-spanning segment. The Virion surface segment spans residues 68–211 (FSYMSLESGT…SSILSNAIMK (144 aa)). Residues Asn96 and Asn133 are each glycosylated (N-linked (GlcNAc...) asparagine; by host).

It belongs to the herpesviridae HHV-1 UL45 family.

Its subcellular location is the virion membrane. This is Envelope protein UL45 homolog (UL45H) from Gallid herpesvirus 2 (strain Chicken/Md5/ATCC VR-987) (GaHV-2).